A 395-amino-acid polypeptide reads, in one-letter code: MAKAKFERTKPHCNIGTIGHVDHGKTTLTAAITAVLAARVAGNTATDFANIDKAPEERERGITISTAHVEYETEKRHYAHVDCPGHADYVKNMITGAAQMDGAILVVAATDGVMAQTKEHILLSRQVGVPYIIVFLNKCDMVDDPELIELVEMEVTEQLEEYGFNDCPIIQGSALKALEDPNGPWGDKIMELMDTVDSYIPDPQRDTDKPFLMPVEDVFTITGRGTVATGRVERGTLHLNDELEILGVKEDVQKTVVTGIEMFRKQLDEAQAGDNIGALLRGINRDQIVRGQVLAKPGTVTCHHKFTAQVYVLTKDEGGRHTPFFNNYRPQFYFRTTDVTGVCELPAGTEMCMPGDNVEMTIELIHPVAMEQGLTFAIREGGRTVGSGRVATVIE.

Residues 10–204 (KPHCNIGTIG…TVDSYIPDPQ (195 aa)) enclose the tr-type G domain. A G1 region spans residues 19 to 26 (GHVDHGKT). 19 to 26 (GHVDHGKT) contacts GTP. Mg(2+) is bound at residue Thr26. Residues 61 to 65 (GITIS) are G2. The tract at residues 82 to 85 (DCPG) is G3. GTP-binding positions include 82 to 86 (DCPGH) and 137 to 140 (NKCD). Residues 137–140 (NKCD) are G4. The interval 173 to 175 (SAL) is G5.

Belongs to the TRAFAC class translation factor GTPase superfamily. Classic translation factor GTPase family. EF-Tu/EF-1A subfamily. Monomer.

Its subcellular location is the cytoplasm. It catalyses the reaction GTP + H2O = GDP + phosphate + H(+). GTP hydrolase that promotes the GTP-dependent binding of aminoacyl-tRNA to the A-site of ribosomes during protein biosynthesis. The polypeptide is Elongation factor Tu (Agathobacter rectalis (strain ATCC 33656 / DSM 3377 / JCM 17463 / KCTC 5835 / VPI 0990) (Eubacterium rectale)).